A 294-amino-acid polypeptide reads, in one-letter code: Probable porphobilinogen deaminase (294 aa).

Cys-233 carries the S-(dipyrrolylmethanemethyl)cysteine modification.

Belongs to the HMBS family. Requires dipyrromethane as cofactor.

It carries out the reaction 4 porphobilinogen + H2O = hydroxymethylbilane + 4 NH4(+). It functions in the pathway porphyrin-containing compound metabolism; protoporphyrin-IX biosynthesis; coproporphyrinogen-III from 5-aminolevulinate: step 2/4. Functionally, tetrapolymerization of the monopyrrole PBG into the hydroxymethylbilane pre-uroporphyrinogen in several discrete steps. The chain is Probable porphobilinogen deaminase from Sulfurisphaera tokodaii (strain DSM 16993 / JCM 10545 / NBRC 100140 / 7) (Sulfolobus tokodaii).